A 395-amino-acid chain; its full sequence is Elongation factor Tu (395 aa).

One can recognise a tr-type G domain in the interval 10 to 204 (KPHVNIGTIG…AVDEYIPTPQ (195 aa)). Residues 19-26 (GHVDHGKT) are G1. 19–26 (GHVDHGKT) contacts GTP. Threonine 26 serves as a coordination point for Mg(2+). A G2 region spans residues 60–64 (GITIS). Residues 81–84 (DCPG) form a G3 region. GTP-binding positions include 81–85 (DCPGH) and 136–139 (NKCD). The segment at 136–139 (NKCD) is G4. The tract at residues 174–176 (SAL) is G5.

The protein belongs to the TRAFAC class translation factor GTPase superfamily. Classic translation factor GTPase family. EF-Tu/EF-1A subfamily. As to quaternary structure, monomer.

It localises to the cytoplasm. It catalyses the reaction GTP + H2O = GDP + phosphate + H(+). GTP hydrolase that promotes the GTP-dependent binding of aminoacyl-tRNA to the A-site of ribosomes during protein biosynthesis. The sequence is that of Elongation factor Tu from Geobacillus stearothermophilus (Bacillus stearothermophilus).